Reading from the N-terminus, the 312-residue chain is L-lactate dehydrogenase (312 aa).

The NAD(+) site is built by Val-14, Asp-35, and Tyr-66. Gln-83 and Arg-90 together coordinate substrate. Residues Ser-103, 120–122 (ASN), and Ser-145 each bind NAD(+). 122 to 125 (NPVD) is a binding site for substrate. Substrate is bound at residue 150-153 (DSAR). The Proton acceptor role is filled by His-177. Tyr-220 carries the phosphotyrosine modification. Residue Thr-229 coordinates substrate.

It belongs to the LDH/MDH superfamily. LDH family. In terms of assembly, homotetramer.

It is found in the cytoplasm. The enzyme catalyses (S)-lactate + NAD(+) = pyruvate + NADH + H(+). The protein operates within fermentation; pyruvate fermentation to lactate; (S)-lactate from pyruvate: step 1/1. In terms of biological role, catalyzes the conversion of lactate to pyruvate. In Mycoplasma genitalium (strain ATCC 33530 / DSM 19775 / NCTC 10195 / G37) (Mycoplasmoides genitalium), this protein is L-lactate dehydrogenase.